Consider the following 224-residue polypeptide: ATP-dependent dethiobiotin synthetase BioD (224 aa).

Residue 14-19 participates in ATP binding; it reads GIGKTV. Thr18 serves as a coordination point for Mg(2+). Lys39 is an active-site residue. Ser43 lines the substrate pocket. ATP contacts are provided by residues Asp56, 117–120, and 177–178; these read EGVG and NE. Mg(2+) contacts are provided by Asp56 and Glu117.

It belongs to the dethiobiotin synthetase family. As to quaternary structure, homodimer. It depends on Mg(2+) as a cofactor.

It localises to the cytoplasm. The catalysed reaction is (7R,8S)-7,8-diammoniononanoate + CO2 + ATP = (4R,5S)-dethiobiotin + ADP + phosphate + 3 H(+). It participates in cofactor biosynthesis; biotin biosynthesis; biotin from 7,8-diaminononanoate: step 1/2. Catalyzes a mechanistically unusual reaction, the ATP-dependent insertion of CO2 between the N7 and N8 nitrogen atoms of 7,8-diaminopelargonic acid (DAPA, also called 7,8-diammoniononanoate) to form a ureido ring. The protein is ATP-dependent dethiobiotin synthetase BioD of Xanthomonas campestris pv. campestris (strain B100).